The chain runs to 217 residues: ATP phosphoribosyltransferase (217 aa).

The protein belongs to the ATP phosphoribosyltransferase family. Short subfamily. Heteromultimer composed of HisG and HisZ subunits.

It is found in the cytoplasm. It catalyses the reaction 1-(5-phospho-beta-D-ribosyl)-ATP + diphosphate = 5-phospho-alpha-D-ribose 1-diphosphate + ATP. The protein operates within amino-acid biosynthesis; L-histidine biosynthesis; L-histidine from 5-phospho-alpha-D-ribose 1-diphosphate: step 1/9. Its function is as follows. Catalyzes the condensation of ATP and 5-phosphoribose 1-diphosphate to form N'-(5'-phosphoribosyl)-ATP (PR-ATP). Has a crucial role in the pathway because the rate of histidine biosynthesis seems to be controlled primarily by regulation of HisG enzymatic activity. This is ATP phosphoribosyltransferase from Burkholderia orbicola (strain MC0-3).